The chain runs to 535 residues: Ribonuclease Y (535 aa).

The helical transmembrane segment at 30 to 50 (IWALPALVIGLAIGAGIGILI) threads the bilayer. The KH domain occupies 225 to 285 (TVSTVALPSE…VRREVARLAL (61 aa)). Positions 351 to 444 (VLQHSLECAL…VQAVDAISGG (94 aa)) constitute an HD domain.

It belongs to the RNase Y family.

The protein localises to the cell membrane. Its function is as follows. Endoribonuclease that initiates mRNA decay. The sequence is that of Ribonuclease Y from Roseiflexus sp. (strain RS-1).